Here is a 169-residue protein sequence, read N- to C-terminus: Probable actin-related protein 2/3 complex subunit 4 (169 aa).

This sequence belongs to the ARPC4 family. Component of the Arp2/3 complex, at least composed of arx-1, arx-2, arx-4 and arx-6.

Its subcellular location is the cytoplasm. The protein resides in the cytoskeleton. Functionally, functions as actin-binding component of the Arp2/3 complex which is involved in regulation of actin polymerization and together with an activating nucleation-promoting factor (NPF) mediates the formation of branched actin networks. Seems to contact the mother actin filament. Plays a role in time-dependent memory loss and the retention of conditioned behavior over time. The chain is Probable actin-related protein 2/3 complex subunit 4 from Caenorhabditis elegans.